Consider the following 311-residue polypeptide: Ribosomal RNA small subunit methyltransferase H 1 (311 aa).

Residues 33 to 35 (AGH), Asp53, Phe80, Asp101, and Gln108 contribute to the S-adenosyl-L-methionine site.

This sequence belongs to the methyltransferase superfamily. RsmH family.

The protein localises to the cytoplasm. It carries out the reaction cytidine(1402) in 16S rRNA + S-adenosyl-L-methionine = N(4)-methylcytidine(1402) in 16S rRNA + S-adenosyl-L-homocysteine + H(+). In terms of biological role, specifically methylates the N4 position of cytidine in position 1402 (C1402) of 16S rRNA. This chain is Ribosomal RNA small subunit methyltransferase H 1, found in Alkaliphilus metalliredigens (strain QYMF).